Here is a 275-residue protein sequence, read N- to C-terminus: Large ribosomal subunit protein uL2 (275 aa).

The interval 223 to 275 (VAMNPVDHPHGGGEGRTSGGRHPVSPWGQPTKGYKTRSNKRTDKYIVRRRNKK) is disordered.

Belongs to the universal ribosomal protein uL2 family. In terms of assembly, part of the 50S ribosomal subunit. Forms a bridge to the 30S subunit in the 70S ribosome.

In terms of biological role, one of the primary rRNA binding proteins. Required for association of the 30S and 50S subunits to form the 70S ribosome, for tRNA binding and peptide bond formation. It has been suggested to have peptidyltransferase activity; this is somewhat controversial. Makes several contacts with the 16S rRNA in the 70S ribosome. The protein is Large ribosomal subunit protein uL2 of Shewanella pealeana (strain ATCC 700345 / ANG-SQ1).